We begin with the raw amino-acid sequence, 315 residues long: Ribosomal RNA small subunit methyltransferase H (315 aa).

S-adenosyl-L-methionine-binding positions include 35–37, D55, F80, D102, and Q109; that span reads GGH.

Belongs to the methyltransferase superfamily. RsmH family.

Its subcellular location is the cytoplasm. The enzyme catalyses cytidine(1402) in 16S rRNA + S-adenosyl-L-methionine = N(4)-methylcytidine(1402) in 16S rRNA + S-adenosyl-L-homocysteine + H(+). Functionally, specifically methylates the N4 position of cytidine in position 1402 (C1402) of 16S rRNA. In Shewanella halifaxensis (strain HAW-EB4), this protein is Ribosomal RNA small subunit methyltransferase H.